Consider the following 325-residue polypeptide: UPF0285 protein MA_3856 (325 aa).

The protein belongs to the UPF0285 family.

This is UPF0285 protein MA_3856 from Methanosarcina acetivorans (strain ATCC 35395 / DSM 2834 / JCM 12185 / C2A).